A 446-amino-acid polypeptide reads, in one-letter code: Probable D-serine dehydratase (446 aa).

Lys116 is subject to N6-(pyridoxal phosphate)lysine.

It belongs to the serine/threonine dehydratase family. DsdA subfamily. It depends on pyridoxal 5'-phosphate as a cofactor.

The catalysed reaction is D-serine = pyruvate + NH4(+). This chain is Probable D-serine dehydratase, found in Bacillus anthracis (strain CDC 684 / NRRL 3495).